Consider the following 339-residue polypeptide: MSSLLEQLSSMTIVVADTGDLEAIRTFKPRDATTNPSLILAAAQVPGYQKLIDEALKSSREEIGIRGSFQEVVKEALDQICVVFGKEILKNIPGRVSTEVDARLSFDTQATVEKARKLIRLYNKAGIKNDRVLIKIASTWEGIKAAEVLEREGIHCNLTLLFNFCQAAACAEAGVTLISPFVGRILDWYKANTGIANYPGPEDPGVISVTKIFNYFKSNNYKTEVMGASFRNIEEIVELAGCDLLTISPKLLDQLSNTNVPLEKKLDSLNPKPVGQKIDIDHEKFESMMNSDSMAFEKLDEGIKKFSKAIDDLEIRLLERIAILEEGKSFALSGNAISS.

Lys135 acts as the Schiff-base intermediate with substrate in catalysis.

The protein belongs to the transaldolase family. Type 1 subfamily. As to quaternary structure, homodimer.

The protein resides in the cytoplasm. The catalysed reaction is D-sedoheptulose 7-phosphate + D-glyceraldehyde 3-phosphate = D-erythrose 4-phosphate + beta-D-fructose 6-phosphate. The protein operates within carbohydrate degradation; pentose phosphate pathway; D-glyceraldehyde 3-phosphate and beta-D-fructose 6-phosphate from D-ribose 5-phosphate and D-xylulose 5-phosphate (non-oxidative stage): step 2/3. Transaldolase is important for the balance of metabolites in the pentose-phosphate pathway. The chain is Transaldolase from Prochlorococcus marinus (strain MIT 9211).